The following is a 777-amino-acid chain: Glucocorticoid receptor (777 aa).

Over residues 1–14 (MDSKESLTPGKEEN) the composition is skewed to basic and acidic residues. Residues 1–22 (MDSKESLTPGKEENPSSVLTQE) are disordered. Residues 1 to 420 (MDSKESLTPG…TATTGPPPKL (420 aa)) form a modulating region. The residue at position 8 (Thr-8) is a Phosphothreonine. Arg-23 is subject to Omega-N-methylarginine. Residues Ser-45, Ser-113, Ser-134, and Ser-141 each carry the phosphoserine modification. The interval 130–183 (NRSTSVPENPKSSASSSVSAAPKEKEFPKTHSDVSSEQQNLKGQTGTNGGNAKL) is disordered. The segment covering 134-150 (SVPENPKSSASSSVSAA) has biased composition (low complexity). Basic and acidic residues predominate over residues 151–163 (PKEKEFPKTHSDV). A compositionally biased stretch (polar residues) spans 164-174 (SSEQQNLKGQT). A phosphoserine mark is found at Ser-203, Ser-211, and Ser-226. Lys-258 participates in a covalent cross-link: Glycyl lysine isopeptide (Lys-Gly) (interchain with G-Cter in SUMO2). Ser-267 carries the phosphoserine modification. Residues Lys-277 and Lys-293 each participate in a glycyl lysine isopeptide (Lys-Gly) (interchain with G-Cter in SUMO); alternate cross-link. Residues Lys-277 and Lys-293 each participate in a glycyl lysine isopeptide (Lys-Gly) (interchain with G-Cter in SUMO2); alternate cross-link. Low complexity predominate over residues 394-414 (SSPSMRPDVSSPPSSSSTATT). The segment at 394 to 415 (SSPSMRPDVSSPPSSSSTATTG) is disordered. Position 404 is a phosphoserine (Ser-404). A Glycyl lysine isopeptide (Lys-Gly) (interchain with G-Cter in ubiquitin) cross-link involves residue Lys-419. 2 consecutive NR C4-type zinc fingers follow at residues 421–441 (CLVC…CGSC) and 457–481 (CAGR…YRKC). A DNA-binding region (nuclear receptor) is located at residues 421–486 (CLVCSDEASG…RYRKCLQAGM (66 aa)). 4 positions are modified to N6-acetyllysine: Lys-480, Lys-492, Lys-494, and Lys-495. The tract at residues 485 to 777 (GMNLEARKTK…NIRKLLFHQK (293 aa)) is interaction with CLOCK. The hinge stretch occupies residues 487-523 (NLEARKTKKKIKGIQQATTGVSQETSENPANKTIVPA). In terms of domain architecture, NR LBD spans 524-758 (TLPQLTPTLV…FPEMLAEIIT (235 aa)). The segment at 532–697 (LVSLLEVIEP…EIRMTYIKEL (166 aa)) is interaction with CRY1. Lys-703 participates in a covalent cross-link: Glycyl lysine isopeptide (Lys-Gly) (interchain with G-Cter in SUMO).

The protein belongs to the nuclear hormone receptor family. NR3 subfamily. As to quaternary structure, heteromultimeric cytoplasmic complex with HSP90AA1, HSPA1A/HSPA1B, and FKBP5 or another immunophilin such as PPID, STIP1, or the immunophilin homolog PPP5C. Upon ligand binding FKBP5 dissociates from the complex and FKBP4 takes its place, thereby linking the complex to dynein and mediating transport to the nucleus, where the complex dissociates. Probably forms a complex composed of chaperones HSP90 and HSP70, co-chaperones CDC37, PPP5C, TSC1 and client protein TSC2, CDK4, AKT, RAF1 and NR3C1; this complex does not contain co-chaperones STIP1/HOP and PTGES3/p23. Directly interacts with UNC45A. Binds to DNA as a homodimer, and as heterodimer with NR3C2 or the retinoid X receptor. Binds STAT5A and STAT5B homodimers and heterodimers. Interacts with NRIP1, POU2F1, POU2F2 and TRIM28. Interacts with several coactivator complexes, including the SMARCA4 complex, CREBBP/EP300, TADA2L (Ada complex) and p160 coactivators such as NCOA2 and NCOA6. Interaction with BAG1 inhibits transactivation. Interacts with HEXIM1 and TGFB1I1. Interacts with NCOA1. Interacts with NCOA3, SMARCA4, SMARCC1, SMARCD1, and SMARCE1. Interacts with CLOCK, CRY1 and CRY2 in a ligand-dependent fashion. Interacts with CIART. Interacts with RWDD3. Interacts with UBE2I/UBC9 and this interaction is enhanced in the presence of RWDD3. Interacts with GRIP1. Interacts with NR4A3 (via nuclear receptor DNA-binding domain), represses transcription activity of NR4A3 on the POMC promoter Nur response element (NurRE). Directly interacts with PNRC2 to attract and form a complex with UPF1 and DCP1A; the interaction leads to rapid mRNA degradation. Interacts with GSK3B. Interacts with FNIP1 and FNIP2. Interacts (via C-terminus) with HNRNPU (via C-terminus). Interacts with MCM3AP. Interacts (via domain NR LBD) with HSP90AA1 and HSP90AB1. In the absence of hormonal ligand, interacts with TACC1. Interacts (via NR LBD domain) with ZNF764 (via KRAB domain); the interaction regulates transcription factor activity of NR3C1 by directing its actions toward certain biologic pathways. Acetylation by CLOCK reduces its binding to glucocorticoid response elements and its transcriptional activity. In terms of processing, increased proteasome-mediated degradation in response to glucocorticoids. Post-translationally, phosphorylated in the absence of hormone; becomes hyperphosphorylated in the presence of glucocorticoid. The Ser-203, Ser-226 and Ser-404-phosphorylated forms are mainly cytoplasmic, and the Ser-211-phosphorylated form is nuclear. Phosphorylation at Ser-211 increases transcriptional activity. Phosphorylation at Ser-203, Ser-226 and Ser-404 decreases signaling capacity. Phosphorylation at Ser-404 may protect from glucocorticoid-induced apoptosis. Phosphorylation at Ser-203 and Ser-211 is not required in regulation of chromosome segregation. May be dephosphorylated by PPP5C, attenuates NR3C1 action. Ubiquitinated by UBR5, leading to its degradation: UBR5 specifically recognizes and binds ligand-bound NR3C1 when it is not associated with coactivators (NCOAs). In presence of NCOAs, the UBR5-degron is not accessible, preventing its ubiquitination and degradation. In terms of processing, sumoylation at Lys-277 and Lys-293 negatively regulates its transcriptional activity. Sumoylation at Lys-703 positively regulates its transcriptional activity in the presence of RWDD3. Sumoylation at Lys-277 and Lys-293 is dispensable whereas sumoylation at Lys-703 is critical for the stimulatory effect of RWDD3 on its transcriptional activity. Heat shock increases sumoylation in a RWDD3-dependent manner.

Its subcellular location is the cytoplasm. It localises to the nucleus. The protein resides in the mitochondrion. It is found in the cytoskeleton. The protein localises to the spindle. Its subcellular location is the microtubule organizing center. It localises to the centrosome. The protein resides in the chromosome. It is found in the nucleoplasm. In terms of biological role, receptor for glucocorticoids (GC). Has a dual mode of action: as a transcription factor that binds to glucocorticoid response elements (GRE), both for nuclear and mitochondrial DNA, and as a modulator of other transcription factors. Affects inflammatory responses, cellular proliferation and differentiation in target tissues. Involved in chromatin remodeling. Plays a role in rapid mRNA degradation by binding to the 5' UTR of target mRNAs and interacting with PNRC2 in a ligand-dependent manner which recruits the RNA helicase UPF1 and the mRNA-decapping enzyme DCP1A, leading to RNA decay. Could act as a coactivator for STAT5-dependent transcription upon growth hormone (GH) stimulation and could reveal an essential role of hepatic GR in the control of body growth. Mediates glucocorticoid-induced apoptosis. Promotes accurate chromosome segregation during mitosis. May act as a tumor suppressor. May play a negative role in adipogenesis through the regulation of lipolytic and antilipogenic gene expression. The chain is Glucocorticoid receptor (NR3C1) from Saguinus oedipus (Cotton-top tamarin).